Here is a 22-residue protein sequence, read N- to C-terminus: Brevinin-1OKa (22 aa).

Lys22 is subject to Lysine amide.

Expressed by the skin glands.

The protein resides in the secreted. Antimicrobial peptide. Active against Gram-negative bacterium E.coli (MIC=12.5 uM) and against Gram-positive bacterium S.aureus (MIC=12.5 uM). This Nidirana okinavana (Kampira Falls frog) protein is Brevinin-1OKa.